The chain runs to 22 residues: Odorant-binding protein 1 (22 aa).

The protein belongs to the calycin superfamily. Lipocalin family. Homodimer. In terms of processing, the N-terminus is blocked.

Functionally, binds the chemical odorant, 2-isobutyl-3-methoxypyrazine. The chain is Odorant-binding protein 1 from Oryctolagus cuniculus (Rabbit).